The primary structure comprises 607 residues: Pescadillo homolog (607 aa).

The BRCT domain maps to 320–413 (KLKNLFKGLK…KLLPVNKYLI (94 aa)). Residues 486 to 607 (EALNSGALEE…KTQRKEILAK (122 aa)) are disordered. The segment covering 495–511 (EAPEEEDDDEEAPEEDE) has biased composition (acidic residues). Residues 530-549 (IFKENPSEQKKLTKQEEALR) are compositionally biased toward basic and acidic residues. Over residues 551 to 562 (RMVKSRHKKLYR) the composition is skewed to basic residues. The segment covering 563 to 607 (KMLEKQKKQTKEANLLKEKRQQIDKKQRVEQTQKRKTQRKEILAK) has biased composition (basic and acidic residues).

The protein belongs to the pescadillo family.

It is found in the nucleus. The protein localises to the nucleolus. Its subcellular location is the nucleoplasm. Functionally, required for maturation of ribosomal RNAs and formation of the large ribosomal subunit. In Culex quinquefasciatus (Southern house mosquito), this protein is Pescadillo homolog.